We begin with the raw amino-acid sequence, 1198 residues long: MPVIPALWEVEMGRSQGQEIETILANRSHSDSTPLPNFLSGSHRPECCTCRLLTASGAQDSLPFGRRLYSGPWRSCEEVCHVSVLSVLSTSCGLSLSLPIFPGWMEWLSPDIALPRRDEWTQTSPARKRITHAKVQGAGQLRLSIDAQDRVLLLHIIEGKGLISKQPGTCDPYVKISLIPEDSRLRHQKTQTVPDCRDPAFHEHFFFPVQEEDDQKRLLVTVWNRASQSRQSGLIGCMSFGVKSLLTPDKEISGWYYLLGEHLGRTKHLKVARRRLRPLRDPLLRMPGGGDTENGKKLKITIPRGKDGFGFTICCDSPVRVQAVDSGGPAERAGLQQLDTVLQLNERPVEHWKCVELAHEIRSCPSEIILLVWRMVPQVKPGPDGGVLRRASCKSTHDLQSPPNKREKNCTHGVQARPEQRHSCHLVCDSSDGLLLGGWERYTEVAKRGGQHTLPALSRATAPTDPNYIILAPLNPGSQLLRPVYQEDTIPEESGSPSKGKSYTGLGKKSRLMKTVQTMKGHGNYQNCPVVRPHATHSSYGTYVTLAPKVLVFPVFVQPLDLCNPARTLLLSEELLLYEGRNKAAEVTLFAYSDLLLFTKEDEPGRCDVLRNPLYLQSVKLQEGSSEDLKFCVLYLAEKAECLFTLEAHSQEQKKRVCWCLSENIAKQQQLAASPPDSKMFETEADEKREMALEEGKGPGAEDSPPSKEPSPGQELPPGQDLPPNKDSPSGQEPAPSQEPLSSKDSATSEGSPPGPDAPPSKDVPPCQEPPPAQDLSPCQDLPAGQEPLPHQDPLLTKDLPAIQESPTRDLPPCQDLPPSQVSLPAKALTEDTMSSGDLLAATGDPPAAPRPAFVIPEVRLDSTYSQKAGAEQGCSGDEEDAEEAEEVEEGEEGEEDEDEDTSDDNYGERSEAKRSSMIETGQGAEGGLSLRVQNSLRRRTHSEGSLLQEPRGPCFASDTTLHCSDGEGAASTWGMPSPSTLKKELGRNGGSMHHLSLFFTGHRKMSGADTVGDDDEASRKRKSKNLAKDMKNKLGIFRRRNESPGAPPAGKADKMMKSFKPTSEEALKWGESLEKLLVHKYGLAVFQAFLRTEFSEENLEFWLACEDFKKVKSQSKMASKAKKIFAEYIAIQACKEVNLDSYTREHTKDNLQSVTRGCFDLAQKRIFGLMEKDSYPRFLRSDLYLDLINQKKMSPPL.

The 120-residue stretch at 137–256 folds into the C2 domain; that stretch reads GAGQLRLSID…TPDKEISGWY (120 aa). The region spanning 299 to 376 is the PDZ domain; it reads KITIPRGKDG…EIILLVWRMV (78 aa). Arg448 is subject to Omega-N-methylarginine. Positions 669-933 are disordered; sequence QQLAASPPDS…GAEGGLSLRV (265 aa). Position 674 is a phosphoserine (Ser674). Residues 679–697 are compositionally biased toward basic and acidic residues; it reads KMFETEADEKREMALEEGK. Over residues 739–751 the composition is skewed to polar residues; sequence EPLSSKDSATSEG. Residues 753–773 are compositionally biased toward pro residues; sequence PPGPDAPPSKDVPPCQEPPPA. Residues 877–906 show a composition bias toward acidic residues; sequence GDEEDAEEAEEVEEGEEGEEDEDEDTSDDN. Residues 907-917 show a composition bias toward basic and acidic residues; it reads YGERSEAKRSS. Phosphoserine occurs at positions 943, 946, 978, and 1007. Disordered stretches follow at residues 1007–1026 and 1032–1056; these read SGAD…KSKN and KNKL…ADKM. The region spanning 1073-1198 is the RGS domain; sequence SLEKLLVHKY…INQKKMSPPL (126 aa).

Binds EFNB1 and EFNB2. Binds the GNB1-GNG2 heterodimer. In terms of processing, phosphorylated by cyclic GMP-dependent protein kinase. Post-translationally, ISGylated.

Its subcellular location is the cytoplasm. It is found in the nucleus. The protein localises to the cell membrane. Its function is as follows. Down-regulates signaling from heterotrimeric G-proteins by increasing the GTPase activity of the alpha subunits, thereby driving them into their inactive GDP-bound form. Down-regulates G-protein-mediated release of inositol phosphates and activation of MAP kinases. This Homo sapiens (Human) protein is Regulator of G-protein signaling 3 (RGS3).